A 377-amino-acid chain; its full sequence is UPF0754 membrane protein LMOf2365_2257 (377 aa).

Helical transmembrane passes span 1-21 and 357-377; these read MSVL…GAMT and YLGG…AMWI.

It belongs to the UPF0754 family.

The protein resides in the cell membrane. The polypeptide is UPF0754 membrane protein LMOf2365_2257 (Listeria monocytogenes serotype 4b (strain F2365)).